Reading from the N-terminus, the 578-residue chain is Sulfite reductase [NADPH] hemoprotein beta-component (578 aa).

Positions 441, 447, 487, and 491 each coordinate [4Fe-4S] cluster. C491 serves as a coordination point for siroheme.

The protein belongs to the nitrite and sulfite reductase 4Fe-4S domain family. Alpha(8)-beta(8). The alpha component is a flavoprotein, the beta component is a hemoprotein. Siroheme is required as a cofactor. The cofactor is [4Fe-4S] cluster.

The enzyme catalyses hydrogen sulfide + 3 NADP(+) + 3 H2O = sulfite + 3 NADPH + 4 H(+). It participates in sulfur metabolism; hydrogen sulfide biosynthesis; hydrogen sulfide from sulfite (NADPH route): step 1/1. Functionally, component of the sulfite reductase complex that catalyzes the 6-electron reduction of sulfite to sulfide. This is one of several activities required for the biosynthesis of L-cysteine from sulfate. This Vibrio vulnificus (strain CMCP6) protein is Sulfite reductase [NADPH] hemoprotein beta-component.